Here is a 51-residue protein sequence, read N- to C-terminus: Protein Tat (51 aa).

The span at 1-25 (EAETATKSCSGRQANQVSLPKQPAS) shows a compositional bias: polar residues. A disordered region spans residues 1 to 51 (EAETATKSCSGRQANQVSLPKQPASQPRGDPTGPKESKKKVETETETDPVN). K21 is covalently cross-linked (Glycyl lysine isopeptide (Lys-Gly) (interchain with G-Cter in ubiquitin)). The Cell attachment site signature appears at 28–30 (RGD). A compositionally biased stretch (basic and acidic residues) spans 33-43 (GPKESKKKVET).

This sequence belongs to the lentiviruses Tat family. Interacts with host CCNT1. Associates with the P-TEFb complex composed at least of Tat, P-TEFb (CDK9 and CCNT1), TAR RNA, RNA Pol II. Recruits the HATs CREBBP, TAF1/TFIID, EP300, PCAF and GCN5L2. Interacts with host KAT5/Tip60; this interaction targets the latter to degradation. Interacts with the host deacetylase SIRT1. Interacts with host capping enzyme RNGTT; this interaction stimulates RNGTT. Binds to host KDR, and to the host integrins ITGAV/ITGB3 and ITGA5/ITGB1. Interacts with host KPNB1/importin beta-1 without previous binding to KPNA1/importin alpha-1. Interacts with EIF2AK2. Interacts with host nucleosome assembly protein NAP1L1; this interaction may be required for the transport of Tat within the nucleus, since the two proteins interact at the nuclear rim. Interacts with host C1QBP/SF2P32; this interaction involves lysine-acetylated Tat. Interacts with the host chemokine receptors CCR2, CCR3 and CXCR4. Interacts with host DPP4/CD26; this interaction may trigger an anti-proliferative effect. Interacts with host LDLR. Interacts with the host extracellular matrix metalloproteinase MMP1. Interacts with host PRMT6; this interaction mediates Tat's methylation. Interacts with, and is ubiquitinated by MDM2/Hdm2. Interacts with host PSMC3 and HTATIP2. Interacts with STAB1; this interaction may overcome SATB1-mediated repression of IL2 and IL2RA (interleukin) in T cells by binding to the same domain than HDAC1. Interacts (when acetylated) with human CDK13, thereby increasing HIV-1 mRNA splicing and promoting the production of the doubly spliced HIV-1 protein Nef. Post-translationally, acetylation by EP300, CREBBP, GCN5L2/GCN5 and PCAF regulates the transactivation activity of Tat. Phosphorylated by EIF2AK2 on serine and threonine residues adjacent to the basic region important for TAR RNA binding and function. Phosphorylation of Tat by EIF2AK2 is dependent on the prior activation of EIF2AK2 by dsRNA. In terms of processing, asymmetrical arginine methylation by host PRMT6 seems to diminish the transactivation capacity of Tat and affects the interaction with host CCNT1. Post-translationally, polyubiquitination by MDM2 does not target Tat to degradation, but activates its transactivation function and fosters interaction with CCNT1 and TAR RNA.

It localises to the host nucleus. The protein resides in the host nucleolus. Its subcellular location is the host cytoplasm. The protein localises to the secreted. Functionally, transcriptional activator that increases RNA Pol II processivity, thereby increasing the level of full-length viral transcripts. Recognizes a hairpin structure at the 5'-LTR of the nascent viral mRNAs referred to as the transactivation responsive RNA element (TAR) and recruits the cyclin T1-CDK9 complex (P-TEFb complex) that will in turn hyperphosphorylate the RNA polymerase II to allow efficient elongation. The CDK9 component of P-TEFb and other Tat-activated kinases hyperphosphorylate the C-terminus of RNA Pol II that becomes stabilized and much more processive. Other factors such as HTATSF1/Tat-SF1, SUPT5H/SPT5, and HTATIP2 are also important for Tat's function. Besides its effect on RNA Pol II processivity, Tat induces chromatin remodeling of proviral genes by recruiting the histone acetyltransferases (HATs) CREBBP, EP300 and PCAF to the chromatin. This also contributes to the increase in proviral transcription rate, especially when the provirus integrates in transcriptionally silent region of the host genome. To ensure maximal activation of the LTR, Tat mediates nuclear translocation of NF-kappa-B by interacting with host RELA. Through its interaction with host TBP, Tat may also modulate transcription initiation. Tat can reactivate a latently infected cell by penetrating in it and transactivating its LTR promoter. In the cytoplasm, Tat is thought to act as a translational activator of HIV-1 mRNAs. Extracellular circulating Tat can be endocytosed by surrounding uninfected cells via the binding to several surface receptors such as CD26, CXCR4, heparan sulfate proteoglycans (HSPG) or LDLR. Neurons are rarely infected, but they internalize Tat via their LDLR. Endosomal low pH allows Tat to cross the endosome membrane to enter the cytosol and eventually further translocate into the nucleus, thereby inducing severe cell dysfunctions ranging from cell activation to cell death. Through its interaction with nuclear HATs, Tat is potentially able to control the acetylation-dependent cellular gene expression. Tat seems to inhibit the HAT activity of KAT5/Tip60 and TAF1, and consequently modify the expression of specific cellular genes. Modulates the expression of many cellular genes involved in cell survival, proliferation or in coding for cytokines (such as IL10) or cytokine receptors. May be involved in the derepression of host interleukin IL2 expression. Mediates the activation of cyclin-dependent kinases and dysregulation of microtubule network. Tat plays a role in T-cell and neurons apoptosis. Tat induced neurotoxicity and apoptosis probably contribute to neuroAIDS. Host extracellular matrix metalloproteinase MMP1 cleaves Tat and decreases Tat's mediated neurotoxicity. Circulating Tat also acts as a chemokine-like and/or growth factor-like molecule that binds to specific receptors on the surface of the cells, affecting many cellular pathways. In the vascular system, Tat binds to ITGAV/ITGB3 and ITGA5/ITGB1 integrins dimers at the surface of endothelial cells and competes with bFGF for heparin-binding sites, leading to an excess of soluble bFGF. Binds to KDR/VEGFR-2. All these Tat-mediated effects enhance angiogenesis in Kaposi's sarcoma lesions. The protein is Protein Tat of Homo sapiens (Human).